Consider the following 304-residue polypeptide: Bifunctional phosphoglucose/phosphomannose isomerase (304 aa).

Positions 16 to 147 (FDKSFKVGKY…KPKIGDVDEA (132 aa)) constitute an SIS domain. D-fructose 6-phosphate is bound by residues glycine 35, serine 36, serine 74, serine 76, threonine 79, and arginine 122. Catalysis depends on glutamate 196, which acts as the Proton acceptor. D-fructose 6-phosphate is bound by residues histidine 212 and lysine 300. The active-site Proton donor is histidine 212. Residue lysine 300 is the Proton acceptor of the active site.

This sequence belongs to the PGI/PMI family. Homodimer.

The enzyme catalyses alpha-D-glucose 6-phosphate = beta-D-fructose 6-phosphate. It carries out the reaction D-mannose 6-phosphate = D-fructose 6-phosphate. Dual specificity isomerase that catalyzes the isomerization of both glucose-6-phosphate and mannose-6-phosphate to fructose-6-phosphate. The sequence is that of Bifunctional phosphoglucose/phosphomannose isomerase from Thermoplasma volcanium (strain ATCC 51530 / DSM 4299 / JCM 9571 / NBRC 15438 / GSS1).